Reading from the N-terminus, the 148-residue chain is Hemoglobin subunit beta-4 (148 aa).

A Globin domain is found at 3 to 148; that stretch reads DWTDPERSAI…VVSALGRQYH (146 aa). Positions 64 and 93 each coordinate heme b.

This sequence belongs to the globin family. In terms of assembly, heterotetramer of two alpha chains and two beta chains. As to expression, red blood cells.

In terms of biological role, involved in oxygen transport from gills to the various peripheral tissues. This is Hemoglobin subunit beta-4 (hbb4) from Oncorhynchus mykiss (Rainbow trout).